Here is a 185-residue protein sequence, read N- to C-terminus: Signal peptidase I P (185 aa).

Residues 1–14 (MFDKEKRKKSNIID) lie on the Cytoplasmic side of the membrane. The chain crosses the membrane as a helical span at residues 15–34 (WIKAILIALILVFLVRTFLF). At 35–185 (EPYIVQGESM…FPLDRIRHAK (151 aa)) the chain is on the extracellular side. Residues S43 and K85 contribute to the active site.

It belongs to the peptidase S26 family.

The protein localises to the cell membrane. It carries out the reaction Cleavage of hydrophobic, N-terminal signal or leader sequences from secreted and periplasmic proteins.. This chain is Signal peptidase I P (sipP), found in Bacillus subtilis subsp. natto.